Consider the following 6753-residue polypeptide: Putative histone-lysine N-methyltransferase 1 (6753 aa).

6 disordered regions span residues 1–28 (MSEN…CKKE), 418–458 (FGNM…GKKN), 470–522 (DTTL…CNPS), 736–1024 (DDDE…KKDK), 1487–1545 (FNNN…NTAT), and 1557–1642 (YKKV…GKSK). The span at 435-449 (NNTSKNNISNNNNNM) shows a compositional bias: low complexity. Basic and acidic residues predominate over residues 475–502 (QAKKESIKTVSKNERKNNMNKHSHDNKV). Over residues 504-516 (KLNKRMSNKRRNN) the composition is skewed to basic residues. Basic and acidic residues predominate over residues 739-794 (ECKKENKDNISESSKRSNNIGEKKMLHVEKSEEHDDMTSDSNKEDTKIEEGRKKSN). Residues 798-808 (IDVDDGEEEEN) are compositionally biased toward acidic residues. Over residues 809–833 (VNNNDNNNDNNNDNDNSSDNNNNDD) the composition is skewed to low complexity. Basic and acidic residues-rich tracts occupy residues 853–866 (EKKD…DKNL) and 885–900 (IKKD…KKNI). Residues 912–932 (RSNSSSTSTSNSSSKSKSSNC) show a composition bias toward low complexity. Composition is skewed to basic and acidic residues over residues 945 to 955 (KMDEKNSEQKK) and 964 to 975 (TCNEGKSKKDST). Basic residues-rich tracts occupy residues 1002–1019 (EKKK…RKGI) and 1492–1506 (KNKR…KNTI). Residues 1522–1533 (SNSHSIEVSSSE) are compositionally biased toward low complexity. The span at 1566–1599 (KNGENKNGENKNGDIKNDDIKNDDIKNDDIRNDD) shows a compositional bias: basic and acidic residues. A compositionally biased stretch (low complexity) spans 1615–1632 (ESNNIDNNNSSNDSLSDV). PHD-type zinc fingers lie at residues 1671 to 1728 (CYRC…CLKC), 1761 to 1819 (KNFC…CSIG), and 2510 to 2579 (KECC…CIKC). The segment at 1764 to 1817 (CIMCNEKYDEDDSKKWVQCDVCKFWIHLSCDKNESRNIETLSNKNIDYKCPTCS) adopts an RING-type; degenerate zinc-finger fold. In terms of domain architecture, Bromo spans 1816 to 1919 (CSIGTFHDKI…KKGRVIIKNM (104 aa)). Positions 2694–2705 (ECNKNEKKKNDN) are enriched in basic and acidic residues. Disordered stretches follow at residues 2694–2768 (ECNK…KDTK), 3053–3072 (EMES…CNNN), 4182–4254 (NEQN…LKTT), 4295–4349 (ENDE…ENEK), and 5331–5460 (NMNM…NNDK). Low complexity predominate over residues 2720–2735 (NNNNNNNGDDNNNIDN). Residues 2758 to 2768 (NEEKKNNKDTK) show a composition bias toward basic and acidic residues. Over residues 3057–3072 (NNNNNNNNNNSDCNNN) the composition is skewed to low complexity. Composition is skewed to basic and acidic residues over residues 4212-4223 (SKKDMLIKKEMN), 4239-4254 (SPKK…LKTT), and 4297-4321 (DENK…EKKK). The segment covering 4322–4338 (KENKKGREKSVKVRKTK) has biased composition (basic residues). Composition is skewed to low complexity over residues 5331–5340 (NMNMLDNNMN) and 5348–5400 (ENNN…NNNN). Basic residues predominate over residues 5401–5411 (KSKKNTQKKKD). Low complexity predominate over residues 5416-5426 (VKINQNNSNNK). A compositionally biased stretch (basic and acidic residues) spans 5434-5460 (SKDNEELKSDNTKNNKTKDSDGNNNDK). The segment at 5496 to 5532 (YMKEKKCKNKEKNRGSKNNNIKNIKLIDMCEWKEDRN) adopts a C2HC pre-PHD-type; degenerate zinc-finger fold. The PHD-type 4; degenerate zinc-finger motif lies at 5558-5610 (STCFLCGYNNASVYCSNEDCNVKFHLNCAFYSTVIKDPSNNPFFRYLKCFNLV). A compositionally biased stretch (low complexity) spans 5905-5952 (NDNNNDINNNDNNNNENNNENINDNNNNNNNNNNNNNNNNSNNNNNNN). Disordered regions lie at residues 5905-5958 (NDNN…YYHN), 6103-6133 (DCSN…PEHI), and 6212-6235 (KFSD…KNQT). Basic and acidic residues predominate over residues 6118–6133 (ENRKNENDDDNIPEHI). The 118-residue stretch at 6612 to 6729 (LRLYVKKSSI…AHEEITYDYQ (118 aa)) folds into the SET domain. The region spanning 6737–6753 (KKLICLCGSSTCLGRMN) is the Post-SET domain.

The protein belongs to the class V-like SAM-binding methyltransferase superfamily.

The catalysed reaction is L-lysyl-[histone] + S-adenosyl-L-methionine = N(6)-methyl-L-lysyl-[histone] + S-adenosyl-L-homocysteine + H(+). Functionally, probable histone methyltransferase. The polypeptide is Putative histone-lysine N-methyltransferase 1 (SET1) (Plasmodium falciparum (isolate 3D7)).